The sequence spans 468 residues: Efflux pump azaK (468 aa).

Residues 1–30 (MTVHPPAVADETSPLLPSQDGPGHNGIVPA) form a disordered region. The next 6 helical transmembrane spans lie at 43 to 65 (QVAL…FPFV), 80 to 100 (VGFY…MLMI), 112 to 132 (KPVL…FGFS), 135 to 155 (LGQM…VVTV), 174 to 194 (YFSL…GALC), and 207 to 227 (LPTV…LMFV). A glycan (N-linked (GlcNAc...) asparagine) is linked at asparagine 228. 6 helical membrane passes run 257-277 (VLPV…YTAV), 296-316 (FYIS…LVLV), 329-349 (ILRG…GASV), 357-377 (VAFW…AMQL), 387-407 (VSPS…IISF), and 429-449 (PGFY…AFTL).

Belongs to the major facilitator superfamily.

Its subcellular location is the cell membrane. Efflux pump that might be required for efficient secretion of azaphilones. In Aspergillus niger (strain ATCC 1015 / CBS 113.46 / FGSC A1144 / LSHB Ac4 / NCTC 3858a / NRRL 328 / USDA 3528.7), this protein is Efflux pump azaK.